The sequence spans 802 residues: Osmosensitive cation channel TMEM63C (802 aa).

Residues M1–G35 lie on the Extracellular side of the membrane. A helical membrane pass occupies residues I36 to A60. Over A61–G124 the chain is Cytoplasmic. Phosphoserine is present on residues S75 and S78. A helical transmembrane segment spans residues E125–Y157. Residues I158 to S180 are Extracellular-facing. Residues Q181–C205 form a helical membrane-spanning segment. Topologically, residues L206 to R401 are cytoplasmic. The helical transmembrane segment at F402–T431 threads the bilayer. At I432–S446 the chain is on the extracellular side. Residues P447–E476 form a helical membrane-spanning segment. At A477–T480 the chain is on the cytoplasmic side. A helical membrane pass occupies residues R481–W517. At L518 to G540 the chain is on the extracellular side. Residues A541–F573 traverse the membrane as a helical segment. Topologically, residues L574–Q593 are cytoplasmic. A helical transmembrane segment spans residues F594–S612. At I613–C615 the chain is on the extracellular side. Residues P616–S640 form a helical membrane-spanning segment. The Cytoplasmic segment spans residues Y641 to N647. A helical membrane pass occupies residues A648–R676. At V677–H681 the chain is on the extracellular side. The helical transmembrane segment at S682 to V702 threads the bilayer. Residues F703–H802 lie on the Cytoplasmic side of the membrane. Residues T753–E785 are disordered.

This sequence belongs to the CSC1 (TC 1.A.17) family. As to quaternary structure, monomer. As to expression, expressed in podocytes of kidney glomeruli.

The protein localises to the endoplasmic reticulum membrane. The protein resides in the cell membrane. It catalyses the reaction Ca(2+)(in) = Ca(2+)(out). Functionally, acts as an osmosensitive cation channel preferentially activated upon hypotonic stress. In contrast to TMEM63B, does not show phospholipid scramblase activity. Enriched in mitochondria-ER contact sites where it may regulate the metabolite flux and organelles' morphologies in response to osmotic changes. In particular may regulate mitochondrial motility and function in motor neuron axons. Required for the functional integrity of the kidney glomerular filtration barrier. In Rattus norvegicus (Rat), this protein is Osmosensitive cation channel TMEM63C (Tmem63c).